A 458-amino-acid chain; its full sequence is ATP synthase subunit beta (458 aa).

ATP is bound at residue 148 to 155; sequence GGAGVGKT.

The protein belongs to the ATPase alpha/beta chains family. F-type ATPases have 2 components, CF(1) - the catalytic core - and CF(0) - the membrane proton channel. CF(1) has five subunits: alpha(3), beta(3), gamma(1), delta(1), epsilon(1). CF(0) has three main subunits: a(1), b(2) and c(9-12). The alpha and beta chains form an alternating ring which encloses part of the gamma chain. CF(1) is attached to CF(0) by a central stalk formed by the gamma and epsilon chains, while a peripheral stalk is formed by the delta and b chains.

It is found in the cell inner membrane. It carries out the reaction ATP + H2O + 4 H(+)(in) = ADP + phosphate + 5 H(+)(out). In terms of biological role, produces ATP from ADP in the presence of a proton gradient across the membrane. The catalytic sites are hosted primarily by the beta subunits. The sequence is that of ATP synthase subunit beta from Shewanella piezotolerans (strain WP3 / JCM 13877).